The primary structure comprises 255 residues: Coenzyme F420:L-glutamate ligase (255 aa).

GTP is bound by residues 11–14 (IPLI), 40–41 (ST), and lysine 45. A divalent metal cation is bound at residue aspartate 109. GTP is bound at residue asparagine 112. A divalent metal cation is bound by residues aspartate 150, threonine 151, and glutamate 208. 206 to 213 (MGEGAGGT) serves as a coordination point for GTP.

This sequence belongs to the CofE family. In terms of assembly, homodimer. Requires Mg(2+) as cofactor. Mn(2+) serves as cofactor. The cofactor is K(+).

It catalyses the reaction oxidized coenzyme F420-0 + GTP + L-glutamate = oxidized coenzyme F420-1 + GDP + phosphate + H(+). The enzyme catalyses oxidized coenzyme F420-1 + GTP + L-glutamate = oxidized coenzyme F420-2 + GDP + phosphate + H(+). The protein operates within cofactor biosynthesis; coenzyme F420 biosynthesis. Its function is as follows. Catalyzes the GTP-dependent successive addition of two or more gamma-linked L-glutamates to the L-lactyl phosphodiester of 7,8-didemethyl-8-hydroxy-5-deazariboflavin (F420-0) to form coenzyme F420-0-glutamyl-glutamate (F420-2) or polyglutamated F420 derivatives. The sequence is that of Coenzyme F420:L-glutamate ligase from Methanosarcina barkeri (strain Fusaro / DSM 804).